The sequence spans 430 residues: Sphingosine-1-phosphate phosphatase 1 (430 aa).

The interval 34–103 (SSPAADEDAE…AGSQRRNSLT (70 aa)) is disordered. Serine 101 is modified (phosphoserine). The residue at position 103 (threonine 103) is a Phosphothreonine. A run of 4 helical transmembrane segments spans residues 121–141 (FCLGTELGNELFYILFFPFWI), 152–172 (LVIIWVLVMYLGQCTKDIIRW), 193–213 (MPSTHAMSGTAIPIAMFLLTY), and 216–236 (WQYPLIYGLILIPCWSSLVCL). The tract at residues 167–175 (KDIIRWPRP) is phosphatase sequence motif I. A phosphatase sequence motif II region spans residues 194-197 (PSTH). The active-site Proton donor is the histidine 197. Residues 237–248 (SRIYMGMHSILD) are phosphatase sequence motif III. The Nucleophile role is filled by histidine 244. 5 consecutive transmembrane segments (helical) span residues 246–266 (ILDVIAGFLYTILILIIFYPL), 279–299 (YAPLIIIGLHLILGIFSFTLD), 311–331 (ILGSGAGIACGSHAAYTLGLS), 348–368 (VTLFGKAILRIVLGMLLVLFV), and 409–429 (YGMVGFSITFLVPYVFSFIGI).

Belongs to the type 2 lipid phosphate phosphatase family. In terms of tissue distribution, highly expressed in liver and kidney. Expressed in epidermis, in the stratum granulosum and the stratum spinosum.

Its subcellular location is the endoplasmic reticulum membrane. It localises to the cell membrane. It carries out the reaction sphinganine 1-phosphate + H2O = sphinganine + phosphate. The catalysed reaction is sphing-4-enine 1-phosphate + H2O = sphing-4-enine + phosphate. Its activity is regulated as follows. Inhibited by NaF, sodium orthovanadate, propanolol, and N-ethylmaleimide. Functionally, specifically dephosphorylates sphingosine 1-phosphate (S1P), dihydro-S1P, and phyto-S1P. Does not act on ceramide 1-phosphate, lysophosphatidic acid or phosphatidic acid. Sphingosine-1-phosphate phosphatase activity is needed for efficient recycling of sphingosine into the sphingolipid synthesis pathway. Regulates the intracellular levels of the bioactive sphingolipid metabolite S1P that regulates diverse biological processes acting both as an extracellular receptor ligand or as an intracellular second messenger. Involved in efficient ceramide synthesis from exogenous sphingoid bases. Converts S1P to sphingosine, which is readily metabolized to ceramide via ceramide synthase. In concert with sphingosine kinase 2 (SphK2), recycles sphingosine into ceramide through a phosphorylation/dephosphorylation cycle. Regulates endoplasmic-to-Golgi trafficking of ceramides, resulting in the regulation of ceramide levels in the endoplasmic reticulum, preferentially long-chain ceramide species, and influences the anterograde membrane transport of both ceramide and proteins from the endoplasmic reticulum to the Golgi apparatus. The modulation of intracellular ceramide levels in turn regulates apoptosis. Via S1P levels, modulates resting tone, intracellular Ca(2+) and myogenic vasoconstriction in resistance arteries. Also involved in unfolded protein response (UPR) and ER stress-induced autophagy via regulation of intracellular S1P levels. Involved in the regulation of epidermal homeostasis and keratinocyte differentiation. This is Sphingosine-1-phosphate phosphatase 1 from Mus musculus (Mouse).